The sequence spans 181 residues: Large ribosomal subunit protein uL6 (181 aa).

Belongs to the universal ribosomal protein uL6 family. Part of the 50S ribosomal subunit.

This protein binds to the 23S rRNA, and is important in its secondary structure. It is located near the subunit interface in the base of the L7/L12 stalk, and near the tRNA binding site of the peptidyltransferase center. This Flavobacterium psychrophilum (strain ATCC 49511 / DSM 21280 / CIP 103535 / JIP02/86) protein is Large ribosomal subunit protein uL6.